Consider the following 772-residue polypeptide: U3 small nucleolar RNA-associated protein 25 homolog (772 aa).

The segment at 1 to 179 (MGKRRNRGRS…SEEFTDVKHE (179 aa)) is disordered. Promotes p53/TP53 degradation regions lie at residues 1–201 (MGKR…SQRP) and 589–651 (VQLP…KKEE). Position 10 is a phosphoserine (serine 10). Positions 25–43 (RDFGEEHPFYDRVSKKEAK) are enriched in basic and acidic residues. Phosphoserine occurs at positions 52, 60, and 64. Positions 54-70 (DSSHSESESESEQEHVS) are enriched in basic and acidic residues. Residues 84-124 (EEEEEEEEEEEEEEEEEEEEEEEEEDDSAVGDAEMNEEAGS) show a composition bias toward acidic residues. The span at 127–136 (GSVGEAAVSE) shows a compositional bias: low complexity. A compositionally biased stretch (basic and acidic residues) spans 169–179 (SSEEFTDVKHE). The interval 652-713 (LNFTHICEYT…YELPTYPHFY (62 aa)) is represses p53/TP53 degradation.

The protein belongs to the UTP25 family. In terms of assembly, interacts with CAPN3; the interaction is required for CAPN3 translocation to the nucleolus. Post-translationally, phosphorylated. Phosphorylation is required to promote p53/TP53 degradation in the nucleolus which promotes cell cycle progression and liver development. Expressed in all tissues tested: brain, small intestine, large intestine, stomach, liver, spleen, thymus, lung, kidney and testes (at protein level).

It is found in the nucleus. Its subcellular location is the nucleolus. Component of the ribosomal small subunit processome for the biogenesis of ribosomes, functions in pre-ribosomal RNA (pre-rRNA) processing. Essential for embryonic development in part through the regulation of p53 pathway. Controls the expansion growth of digestive organs and liver. Also involved in the sympathetic neuronal development. Mediates, with CAPN3, the proteasome-independent degradation of p53/TP53. In Mus musculus (Mouse), this protein is U3 small nucleolar RNA-associated protein 25 homolog.